We begin with the raw amino-acid sequence, 451 residues long: Glyceraldehyde-3-phosphate dehydrogenase B, chloroplastic (451 aa).

Residues 1–83 (MASHAALAPS…AAPVRGETVA (83 aa)) constitute a chloroplast transit peptide. Residues 94–95 (RI), D118, and R163 each bind NADP(+). D-glyceraldehyde 3-phosphate contacts are provided by residues 237–239 (SCT), T268, R283, 296–297 (TG), and R319. The active-site Nucleophile is the C238. An NADP(+)-binding site is contributed by N402.

This sequence belongs to the glyceraldehyde-3-phosphate dehydrogenase family. As to quaternary structure, tetramer of either four A chains (GAPDH 2) or two A and two B chains (GAPDH 1).

It is found in the plastid. The protein resides in the chloroplast. It catalyses the reaction D-glyceraldehyde 3-phosphate + phosphate + NADP(+) = (2R)-3-phospho-glyceroyl phosphate + NADPH + H(+). It functions in the pathway carbohydrate biosynthesis; Calvin cycle. This Spinacia oleracea (Spinach) protein is Glyceraldehyde-3-phosphate dehydrogenase B, chloroplastic (GAPB).